We begin with the raw amino-acid sequence, 584 residues long: DNA mismatch repair protein MutL (584 aa).

Belongs to the DNA mismatch repair MutL/HexB family.

Functionally, this protein is involved in the repair of mismatches in DNA. It is required for dam-dependent methyl-directed DNA mismatch repair. May act as a 'molecular matchmaker', a protein that promotes the formation of a stable complex between two or more DNA-binding proteins in an ATP-dependent manner without itself being part of a final effector complex. The polypeptide is DNA mismatch repair protein MutL (Buchnera aphidicola subsp. Acyrthosiphon pisum (strain Tuc7)).